The following is a 317-amino-acid chain: Testis-specific Y-encoded protein 1 (317 aa).

Disordered regions lie at residues 1–39 and 91–118; these read MSRP…FQVV and DEEQ…PGGP. Basic and acidic residues-rich tracts occupy residues 15 to 26 and 95 to 112; these read QGQEERERRSEE and EQRP…EQGQ.

It belongs to the nucleosome assembly protein (NAP) family. Phosphorylated. In terms of tissue distribution, testis. Probably in spermatogonia.

The protein localises to the cytoplasm. It is found in the nucleus. In terms of biological role, may be involved in sperm differentiation and proliferation. The chain is Testis-specific Y-encoded protein 1 (TSPY1) from Bos taurus (Bovine).